A 326-amino-acid polypeptide reads, in one-letter code: Protein GVP36 (326 aa).

At serine 2 the chain carries N-acetylserine. The residue at position 2 (serine 2) is a Phosphoserine. Residues lysine 13, lysine 305, and lysine 313 each participate in a glycyl lysine isopeptide (Lys-Gly) (interchain with G-Cter in ubiquitin) cross-link. Residues 299–326 (AEEPEAKPEVAEEEKPQTAISMNDEDDA) are disordered. Over residues 302–314 (PEAKPEVAEEEKP) the composition is skewed to basic and acidic residues. Residue serine 319 is modified to Phosphoserine.

The protein localises to the golgi apparatus membrane. The protein is Protein GVP36 (GVP36) of Saccharomyces cerevisiae (strain ATCC 204508 / S288c) (Baker's yeast).